The sequence spans 262 residues: PsbP domain-containing protein 6, chloroplastic (262 aa).

Cysteines 128 and 132 form a disulfide.

Belongs to the PsbP family.

Its subcellular location is the plastid. The protein localises to the chloroplast thylakoid lumen. In terms of biological role, may be involved in the redox regulation of photosystem II. The polypeptide is PsbP domain-containing protein 6, chloroplastic (PPD6) (Arabidopsis thaliana (Mouse-ear cress)).